Consider the following 686-residue polypeptide: Acyl-CoA synthetase short-chain family member 3, mitochondrial (686 aa).

The transit peptide at methionine 1–glycine 29 directs the protein to the mitochondrion. Glutamate 226–arginine 229 lines the CoA pocket. ATP-binding positions include glycine 424–arginine 426 and aspartate 445–threonine 450. At lysine 517 the chain carries N6-succinyllysine. Lysine 523 carries the post-translational modification N6-acetyllysine. ATP contacts are provided by aspartate 538, arginine 553, and arginine 564. Arginine 623 lines the CoA pocket.

It belongs to the ATP-dependent AMP-binding enzyme family.

The protein localises to the mitochondrion matrix. The enzyme catalyses acetate + ATP + CoA = acetyl-CoA + AMP + diphosphate. The catalysed reaction is propanoate + ATP + CoA = propanoyl-CoA + AMP + diphosphate. It carries out the reaction butanoate + ATP + CoA = butanoyl-CoA + AMP + diphosphate. Its function is as follows. Catalyzes the synthesis of acetyl-CoA from short-chain fatty acids. Propionate is the preferred substrate but can also utilize acetate and butyrate with a much lower affinity. The chain is Acyl-CoA synthetase short-chain family member 3, mitochondrial (ACSS3) from Bos taurus (Bovine).